An 80-amino-acid chain; its full sequence is Conotoxin Ca11.3 (80 aa).

The first 19 residues, Met1–Gly19, serve as a signal peptide directing secretion. A propeptide spanning residues Ala20–Lys42 is cleaved from the precursor. 4 cysteine pairs are disulfide-bonded: Cys46/Cys60, Cys53/Cys65, Cys59/Cys72, and Cys64/Cys79.

Belongs to the conotoxin I3 superfamily. Expressed by the venom duct.

The protein localises to the secreted. This is Conotoxin Ca11.3 from Conus caracteristicus (Characteristic cone).